A 171-amino-acid chain; its full sequence is Photosystem I assembly protein Ycf3 (171 aa).

3 TPR repeats span residues 35–68 (AFTYYRDGMSAQAEGEYAEALQNYYEAMRLEVDA), 72–105 (SYILYNIGLIHTSNGEHAKALEYYYQALERNPYL), and 120–153 (GEQAIESGNSRISNLLFDKAADYWKEAIRLAPTN).

The protein belongs to the Ycf3 family.

The protein localises to the plastid. It localises to the chloroplast thylakoid membrane. Essential for the assembly of the photosystem I (PSI) complex. May act as a chaperone-like factor to guide the assembly of the PSI subunits. The protein is Photosystem I assembly protein Ycf3 of Nephroselmis olivacea (Green alga).